The sequence spans 338 residues: MSSDGNVTGGGGANTVGVTNKPFFCYQCNRTVNVTISPPSSDPTCPICNEGFLEEYDNPNPNQGSGFLNPNPNSIPFHDLFLTLSDPFASLLPLLFPSSSSTTTSSSASIDPNNPSLSGPTRSGRGDPFAFDPFTFIQNHLNDLRSSGAQIEFVIQNNPSDQGFRLPANIGDYFIGPGLEQLIQQLAENDPNRYGTPPASKSAIEALPLVNITKSNLNSEFNQCAVCMDDFEEGTEAKQMPCKHLYHKDCLLPWLELHNSCPVCRHELPTDDPDYERRVRGAQGTSGGNDGDNSGQRSDGDNRTVERSFRISLPWPFQARGPGPAPGDNAETRQEDLD.

Residues 102–124 are disordered; the sequence is TTTSSSASIDPNNPSLSGPTRSG. Polar residues predominate over residues 110–121; it reads IDPNNPSLSGPT. The RING-type; atypical zinc finger occupies 224-265; that stretch reads CAVCMDDFEEGTEAKQMPCKHLYHKDCLLPWLELHNSCPVCR. Basic and acidic residues-rich tracts occupy residues 267–279 and 298–309; these read ELPT…ERRV and SDGDNRTVERSF. Residues 267-338 form a disordered region; that stretch reads ELPTDDPDYE…NAETRQEDLD (72 aa).

In terms of processing, auto-ubiquitinated as part of the enzymatic reaction. In terms of tissue distribution, mostly expressed in cotton fibers, and, to a lower extent, in leaves and flowers.

The enzyme catalyses S-ubiquitinyl-[E2 ubiquitin-conjugating enzyme]-L-cysteine + [acceptor protein]-L-lysine = [E2 ubiquitin-conjugating enzyme]-L-cysteine + N(6)-ubiquitinyl-[acceptor protein]-L-lysine.. Its pathway is protein modification; protein ubiquitination. E3 ubiquitin-protein ligase which accepts ubiquitin from an E2 ubiquitin-conjugating enzyme in the form of a thioester and then directly transfers the ubiquitin to targeted substrates. Promotes polyubiquitination of target proteins. This chain is E3 ubiquitin-protein ligase RING1 (RING1), found in Gossypium hirsutum (Upland cotton).